The primary structure comprises 323 residues: Palmitoyltransferase ZDHHC20-B (323 aa).

Topologically, residues 1–14 (MAPTHVLRCCQRGL) are cytoplasmic. A helical membrane pass occupies residues 15–35 (AWIPVIFIALVVCWSYYAYVV). Topologically, residues 36-41 (ELCLLV) are lumenal. Residues 42–62 (YLVVFHLSFVMFVWSYWKTIF) traverse the membrane as a helical segment. The Cytoplasmic segment spans residues 63 to 157 (TKPANPSKEF…NNCVGFSNYK (95 aa)). Positions 114–164 (RYCDRCQVIKPDRCHHCSACDMCVLKMDHHCPWVNNCVGFSNYKFFILFLT) constitute a DHHC domain. Cysteine 144 acts as the S-palmitoyl cysteine intermediate in catalysis. The chain crosses the membrane as a helical span at residues 158-178 (FFILFLTYSLVYCLFIAASVL). Residues 179–195 (QYFIKFWTSDLPESHAK) are Lumenal-facing. The helical transmembrane segment at 196–219 (FHVLFLFFVAAMFCISILSLFTYH) threads the bilayer. Over 220 to 323 (LWLVGKNRST…KQAKKKKTDE (104 aa)) the chain is Cytoplasmic.

Belongs to the DHHC palmitoyltransferase family.

Its subcellular location is the golgi apparatus membrane. It is found in the cell membrane. It localises to the cytoplasm. The protein resides in the perinuclear region. The protein localises to the endoplasmic reticulum membrane. Its subcellular location is the endoplasmic reticulum-Golgi intermediate compartment membrane. The catalysed reaction is L-cysteinyl-[protein] + hexadecanoyl-CoA = S-hexadecanoyl-L-cysteinyl-[protein] + CoA. The enzyme catalyses L-cysteinyl-[protein] + tetradecanoyl-CoA = S-tetradecanoyl-L-cysteinyl-[protein] + CoA. It carries out the reaction L-cysteinyl-[protein] + octadecanoyl-CoA = S-octadecanoyl-L-cysteinyl-[protein] + CoA. Functionally, palmitoyltransferase that could catalyze the addition of palmitate onto various protein substrates. Catalyzes palmitoylation of Cys residues on protein substrates and has a preference for acyl-CoA with C16 fatty acid chains but may also utilize acyl-CoA with C14 and C18 fatty acid chains. The sequence is that of Palmitoyltransferase ZDHHC20-B (zdhhc20b) from Danio rerio (Zebrafish).